We begin with the raw amino-acid sequence, 575 residues long: Adenine deaminase (575 aa).

This sequence belongs to the metallo-dependent hydrolases superfamily. Adenine deaminase family. Mn(2+) serves as cofactor.

It catalyses the reaction adenine + H2O + H(+) = hypoxanthine + NH4(+). The chain is Adenine deaminase from Nitratidesulfovibrio vulgaris (strain DP4) (Desulfovibrio vulgaris).